Here is a 220-residue protein sequence, read N- to C-terminus: Large ribosomal subunit protein bL21c (220 aa).

It belongs to the bacterial ribosomal protein bL21 family. Part of the 50S ribosomal subunit.

The protein localises to the plastid. The protein resides in the chloroplast. In terms of biological role, this protein binds to 23S ribosomal RNA in the presence of protein L20. This is Large ribosomal subunit protein bL21c (RPL21) from Arabidopsis thaliana (Mouse-ear cress).